The primary structure comprises 77 residues: uncharacterized protein (77 aa).

This is an uncharacterized protein from Haemophilus phage HP1 (strain HP1c1) (Bacteriophage HP1).